The following is a 108-amino-acid chain: Small ribosomal subunit protein eS25B (108 aa).

Residues 1 to 20 show a composition bias toward low complexity; it reads MPPKQQLSKAAKAAAALAGG. The interval 1 to 30 is disordered; it reads MPPKQQLSKAAKAAAALAGGKKSKKKWSKK. The residue at position 2 (proline 2) is a N,N-dimethylproline; by NTM1. Basic residues predominate over residues 21-30; sequence KKSKKKWSKK.

The protein belongs to the eukaryotic ribosomal protein eS25 family. As to quaternary structure, component of the small ribosomal subunit (SSU). Mature yeast ribosomes consist of a small (40S) and a large (60S) subunit. The 40S small subunit contains 1 molecule of ribosomal RNA (18S rRNA) and 33 different proteins (encoded by 57 genes). The large 60S subunit contains 3 rRNA molecules (25S, 5.8S and 5S rRNA) and 46 different proteins (encoded by 81 genes).

The protein localises to the cytoplasm. Its function is as follows. Component of the ribosome, a large ribonucleoprotein complex responsible for the synthesis of proteins in the cell. The small ribosomal subunit (SSU) binds messenger RNAs (mRNAs) and translates the encoded message by selecting cognate aminoacyl-transfer RNA (tRNA) molecules. The large subunit (LSU) contains the ribosomal catalytic site termed the peptidyl transferase center (PTC), which catalyzes the formation of peptide bonds, thereby polymerizing the amino acids delivered by tRNAs into a polypeptide chain. The nascent polypeptides leave the ribosome through a tunnel in the LSU and interact with protein factors that function in enzymatic processing, targeting, and the membrane insertion of nascent chains at the exit of the ribosomal tunnel. This chain is Small ribosomal subunit protein eS25B, found in Saccharomyces cerevisiae (strain ATCC 204508 / S288c) (Baker's yeast).